A 153-amino-acid polypeptide reads, in one-letter code: Lipoprotein signal peptidase (153 aa).

Transmembrane regions (helical) follow at residues 11–31, 39–59, and 68–88; these read ILIL…SLFV, DCID…FAFL, and LVLV…CYAI. Active-site residues include D112 and D129. The chain crosses the membrane as a helical span at residues 122-142; it reads FAVFNFADVMIDVAVVWILLL.

Belongs to the peptidase A8 family.

It is found in the cell inner membrane. It catalyses the reaction Release of signal peptides from bacterial membrane prolipoproteins. Hydrolyzes -Xaa-Yaa-Zaa-|-(S,diacylglyceryl)Cys-, in which Xaa is hydrophobic (preferably Leu), and Yaa (Ala or Ser) and Zaa (Gly or Ala) have small, neutral side chains.. Its pathway is protein modification; lipoprotein biosynthesis (signal peptide cleavage). This protein specifically catalyzes the removal of signal peptides from prolipoproteins. The chain is Lipoprotein signal peptidase from Sulfurimonas denitrificans (strain ATCC 33889 / DSM 1251) (Thiomicrospira denitrificans (strain ATCC 33889 / DSM 1251)).